Here is a 412-residue protein sequence, read N- to C-terminus: Serine/threonine transporter SstT (412 aa).

10 helical membrane-spanning segments follow: residues 16–36 (LVAQ…FLPG), 44–64 (LGDL…FVLV), 82–102 (IIVL…LASF), 115–135 (TDVI…FNIV), 141–161 (ALLN…GFAF), 179–199 (VTLI…GLVA), 217–237 (LLVL…LIVF), 298–318 (MGGA…TLGI), 330–350 (LLAA…LLLI), and 357–377 (FGIS…IGVV).

This sequence belongs to the dicarboxylate/amino acid:cation symporter (DAACS) (TC 2.A.23) family.

It localises to the cell inner membrane. The catalysed reaction is L-serine(in) + Na(+)(in) = L-serine(out) + Na(+)(out). It carries out the reaction L-threonine(in) + Na(+)(in) = L-threonine(out) + Na(+)(out). Its function is as follows. Involved in the import of serine and threonine into the cell, with the concomitant import of sodium (symport system). The chain is Serine/threonine transporter SstT from Stutzerimonas stutzeri (strain A1501) (Pseudomonas stutzeri).